Consider the following 667-residue polypeptide: Probable oxidoreductase YyaE (667 aa).

The 4Fe-4S Mo/W bis-MGD-type domain occupies 2–59 (SKVHQSACPLNCWDSCGFLVTVDDGKVTKVDGDPNHPITEGKICGRGRMLETKTNSPD). [4Fe-4S] cluster-binding residues include Cys-9, Cys-13, Cys-17, and Cys-45.

This sequence belongs to the prokaryotic molybdopterin-containing oxidoreductase family. The cofactor is Mo-bis(molybdopterin guanine dinucleotide).

This chain is Probable oxidoreductase YyaE (yyaE), found in Bacillus subtilis (strain 168).